A 312-amino-acid chain; its full sequence is Porphobilinogen deaminase (312 aa).

Cysteine 235 is subject to S-(dipyrrolylmethanemethyl)cysteine.

The protein belongs to the HMBS family. As to quaternary structure, monomer. Requires dipyrromethane as cofactor.

It catalyses the reaction 4 porphobilinogen + H2O = hydroxymethylbilane + 4 NH4(+). Its pathway is porphyrin-containing compound metabolism; protoporphyrin-IX biosynthesis; coproporphyrinogen-III from 5-aminolevulinate: step 2/4. Tetrapolymerization of the monopyrrole PBG into the hydroxymethylbilane pre-uroporphyrinogen in several discrete steps. This is Porphobilinogen deaminase from Mycolicibacterium gilvum (strain PYR-GCK) (Mycobacterium gilvum (strain PYR-GCK)).